The primary structure comprises 137 residues: FAD synthase (137 aa).

Residues 5-6, 10-13, and D88 contribute to the ATP site; these read TF and HPGH.

The protein belongs to the archaeal FAD synthase family. In terms of assembly, homodimer. The cofactor is a divalent metal cation.

It carries out the reaction FMN + ATP + H(+) = FAD + diphosphate. The protein operates within cofactor biosynthesis; FAD biosynthesis; FAD from FMN: step 1/1. In terms of biological role, catalyzes the transfer of the AMP portion of ATP to flavin mononucleotide (FMN) to produce flavin adenine dinucleotide (FAD) coenzyme. This chain is FAD synthase, found in Archaeoglobus fulgidus (strain ATCC 49558 / DSM 4304 / JCM 9628 / NBRC 100126 / VC-16).